We begin with the raw amino-acid sequence, 563 residues long: O-fucosyltransferase 14 (563 aa).

A compositionally biased stretch (low complexity) spans 1–16 (MVKVSSSTTSSSSSSS). A disordered region spans residues 1–25 (MVKVSSSTTSSSSSSSPDEESDLQN). Residues 73-93 (IFIFLPIVIILIYLSTDFSNY) traverse the membrane as a helical; Signal-anchor for type II membrane protein segment. 3 N-linked (GlcNAc...) asparagine glycosylation sites follow: asparagine 135, asparagine 140, and asparagine 339. Substrate is bound by residues 412-414 (HFR) and 528-529 (TF).

Belongs to the glycosyltransferase GT106 family.

The protein localises to the membrane. Its pathway is glycan metabolism. In Arabidopsis thaliana (Mouse-ear cress), this protein is O-fucosyltransferase 14.